A 188-amino-acid chain; its full sequence is Pyridoxal 5'-phosphate synthase subunit PdxT (188 aa).

47–49 lines the L-glutamine pocket; it reads GES. The active-site Nucleophile is the cysteine 79. Residues arginine 106 and 134-135 each bind L-glutamine; that span reads IR. Active-site charge relay system residues include histidine 169 and glutamate 171.

This sequence belongs to the glutaminase PdxT/SNO family. In terms of assembly, in the presence of PdxS, forms a dodecamer of heterodimers. Only shows activity in the heterodimer.

It catalyses the reaction aldehydo-D-ribose 5-phosphate + D-glyceraldehyde 3-phosphate + L-glutamine = pyridoxal 5'-phosphate + L-glutamate + phosphate + 3 H2O + H(+). The catalysed reaction is L-glutamine + H2O = L-glutamate + NH4(+). It participates in cofactor biosynthesis; pyridoxal 5'-phosphate biosynthesis. Functionally, catalyzes the hydrolysis of glutamine to glutamate and ammonia as part of the biosynthesis of pyridoxal 5'-phosphate. The resulting ammonia molecule is channeled to the active site of PdxS. The chain is Pyridoxal 5'-phosphate synthase subunit PdxT from Caldicellulosiruptor bescii (strain ATCC BAA-1888 / DSM 6725 / KCTC 15123 / Z-1320) (Anaerocellum thermophilum).